A 319-amino-acid polypeptide reads, in one-letter code: Cytochrome c biogenesis protein CcsA (319 aa).

8 consecutive transmembrane segments (helical) span residues 15–35, 44–64, 71–91, 96–116, 141–161, 223–243, 258–278, and 284–304; these read FSIV…NKIV, GMIL…IFAG, LYES…IPYF, LSAI…SGFF, MILA…LLVI, VISL…VWAN, WAFI…NINL, and AIVA…VNLL.

It belongs to the CcmF/CycK/Ccl1/NrfE/CcsA family. May interact with Ccs1.

The protein localises to the plastid. The protein resides in the chloroplast thylakoid membrane. In terms of biological role, required during biogenesis of c-type cytochromes (cytochrome c6 and cytochrome f) at the step of heme attachment. The polypeptide is Cytochrome c biogenesis protein CcsA (Fagopyrum esculentum subsp. ancestrale (Wild buckwheat)).